The following is a 906-amino-acid chain: Protein translocase subunit SecA (906 aa).

Residues glutamine 86, 104–108, and aspartate 499 each bind ATP; that span reads GEGKT. Residues 862-885 are disordered; sequence KPVVSRIDPKDRNPDDPTSWGRVS. Zn(2+)-binding residues include cysteine 890, cysteine 892, cysteine 901, and histidine 902.

Belongs to the SecA family. As to quaternary structure, monomer and homodimer. Part of the essential Sec protein translocation apparatus which comprises SecA, SecYEG and auxiliary proteins SecDF-YajC and YidC. Zn(2+) is required as a cofactor.

The protein resides in the cell inner membrane. It is found in the cytoplasm. The catalysed reaction is ATP + H2O + cellular proteinSide 1 = ADP + phosphate + cellular proteinSide 2.. Functionally, part of the Sec protein translocase complex. Interacts with the SecYEG preprotein conducting channel. Has a central role in coupling the hydrolysis of ATP to the transfer of proteins into and across the cell membrane, serving both as a receptor for the preprotein-SecB complex and as an ATP-driven molecular motor driving the stepwise translocation of polypeptide chains across the membrane. This chain is Protein translocase subunit SecA, found in Rickettsia massiliae (strain Mtu5).